A 331-amino-acid chain; its full sequence is Low affinity immunoglobulin epsilon Fc receptor (331 aa).

Over 1-23 (MEENEYSGYWEPPRKRCCCARRG) the chain is Cytoplasmic. S-palmitoyl cysteine attachment occurs at residues Cys-17 and Cys-18. Residues 24–49 (TQLMLVGLLSTAMWAGLLALLLLWHW) form a helical; Signal-anchor for type II membrane protein membrane-spanning segment. Residues 50–331 (ETEKNLKQLG…PTRPTPKSEP (282 aa)) are Extracellular-facing. The N-linked (GlcNAc...) asparagine glycan is linked to Asn-65. 3 repeats span residues 71–91 (KDLQKFQSNQLAQKSQVVQMS), 92–112 (QNLQELQAEQKQMKAQDSRLS), and 113–133 (QNLTGLQEDLRNAQSQNSKLS). An N-linked (GlcNAc...) asparagine glycan is attached at Asn-114. Intrachain disulfides connect Cys-183–Cys-311, Cys-186–Cys-197, Cys-214–Cys-305, and Cys-282–Cys-296. Positions 185 to 298 (ICPKNWLHFQ…GQWNDAFCRS (114 aa)) constitute a C-type lectin domain. Ca(2+) is bound by residues Glu-272, Asn-292, and Asp-293. Ser-319 carries O-linked (Xyl...) (chondroitin sulfate) serine glycosylation.

In terms of assembly, homotrimer. Interacts (via C-type lectin domain) with IGHE (via CH3 region); this interaction regulates IgE homeostasis. Interacts (via C-terminus) with CR2/CD21 (via Sushi domain 1 and 2). In terms of processing, N- and O-glycosylated.

Its subcellular location is the cell membrane. The protein resides in the secreted. In terms of biological role, low-affinity receptor for immunoglobulin E (IgE) and CR2/CD21. Has essential roles in the regulation of IgE production and in the differentiation of B cells. On B cells, initiates IgE-dependent antigen uptake and presentation to T cells. On macrophages, upon IgE binding and antigen cross-linking induces intracellular killing of parasites through activation of L-Arginine-nitric oxide pathway. The protein is Low affinity immunoglobulin epsilon Fc receptor (Fcer2) of Mus musculus (Mouse).